The chain runs to 426 residues: Glutamate-1-semialdehyde 2,1-aminomutase (426 aa).

Lys265 bears the N6-(pyridoxal phosphate)lysine mark.

The protein belongs to the class-III pyridoxal-phosphate-dependent aminotransferase family. HemL subfamily. As to quaternary structure, homodimer. Pyridoxal 5'-phosphate serves as cofactor.

It localises to the cytoplasm. It catalyses the reaction (S)-4-amino-5-oxopentanoate = 5-aminolevulinate. It participates in porphyrin-containing compound metabolism; protoporphyrin-IX biosynthesis; 5-aminolevulinate from L-glutamyl-tRNA(Glu): step 2/2. This chain is Glutamate-1-semialdehyde 2,1-aminomutase, found in Klebsiella pneumoniae subsp. pneumoniae (strain ATCC 700721 / MGH 78578).